The primary structure comprises 257 residues: Deoxyribose-phosphate aldolase (257 aa).

D102 acts as the Proton donor/acceptor in catalysis. The active-site Schiff-base intermediate with acetaldehyde is the K166. K198 functions as the Proton donor/acceptor in the catalytic mechanism.

This sequence belongs to the DeoC/FbaB aldolase family. DeoC type 2 subfamily.

The protein resides in the cytoplasm. It catalyses the reaction 2-deoxy-D-ribose 5-phosphate = D-glyceraldehyde 3-phosphate + acetaldehyde. The protein operates within carbohydrate degradation; 2-deoxy-D-ribose 1-phosphate degradation; D-glyceraldehyde 3-phosphate and acetaldehyde from 2-deoxy-alpha-D-ribose 1-phosphate: step 2/2. Catalyzes a reversible aldol reaction between acetaldehyde and D-glyceraldehyde 3-phosphate to generate 2-deoxy-D-ribose 5-phosphate. This is Deoxyribose-phosphate aldolase from Shewanella frigidimarina (strain NCIMB 400).